Consider the following 905-residue polypeptide: Protein translocase subunit SecA (905 aa).

ATP-binding positions include Gln89, 107–111 (GEGKT), and Asp502. Positions 887, 889, 898, and 899 each coordinate Zn(2+).

This sequence belongs to the SecA family. In terms of assembly, monomer and homodimer. Part of the essential Sec protein translocation apparatus which comprises SecA, SecYEG and auxiliary proteins SecDF-YajC and YidC. Requires Zn(2+) as cofactor.

It localises to the cell inner membrane. It is found in the cytoplasm. It carries out the reaction ATP + H2O + cellular proteinSide 1 = ADP + phosphate + cellular proteinSide 2.. Functionally, part of the Sec protein translocase complex. Interacts with the SecYEG preprotein conducting channel. Has a central role in coupling the hydrolysis of ATP to the transfer of proteins into and across the cell membrane, serving both as a receptor for the preprotein-SecB complex and as an ATP-driven molecular motor driving the stepwise translocation of polypeptide chains across the membrane. The sequence is that of Protein translocase subunit SecA from Rhizobium leguminosarum bv. trifolii (strain WSM2304).